A 358-amino-acid polypeptide reads, in one-letter code: Heme A synthase (358 aa).

8 helical membrane passes run 22–42 (IQVWLYSILLLCLAIVLVGGA), 107–127 (ILGRLVGLLALLGLIWFWATK), 139–159 (IVPILIAFQGAIGWWMVASGI), 173–193 (AFHLITACFIITFVTYLSRGF), 208–228 (FAGWLVVLILIEIYFGALVAG), 269–289 (FIHRFFAYFLFFVTIIHAFYV), 302–322 (AFFICVMIVVQAFLGIITLLR), and 324–344 (VPIGLGLIHQSVALAILCFSV). Histidine 271 serves as a coordination point for heme. Residue histidine 332 participates in heme binding.

Belongs to the COX15/CtaA family. Type 2 subfamily. Interacts with CtaB. Requires heme b as cofactor.

It localises to the cell membrane. The catalysed reaction is Fe(II)-heme o + 2 A + H2O = Fe(II)-heme a + 2 AH2. It participates in porphyrin-containing compound metabolism; heme A biosynthesis; heme A from heme O: step 1/1. Its function is as follows. Catalyzes the conversion of heme O to heme A by two successive hydroxylations of the methyl group at C8. The first hydroxylation forms heme I, the second hydroxylation results in an unstable dihydroxymethyl group, which spontaneously dehydrates, resulting in the formyl group of heme A. This is Heme A synthase from Bartonella quintana (strain Toulouse) (Rochalimaea quintana).